The sequence spans 613 residues: 4-hydroxy-3-methylbut-2-en-1-yl diphosphate synthase (flavodoxin) (613 aa).

The [4Fe-4S] cluster site is built by cysteine 514, cysteine 517, cysteine 548, and glutamate 555.

The protein belongs to the IspG family. [4Fe-4S] cluster is required as a cofactor.

It carries out the reaction (2E)-4-hydroxy-3-methylbut-2-enyl diphosphate + oxidized [flavodoxin] + H2O + 2 H(+) = 2-C-methyl-D-erythritol 2,4-cyclic diphosphate + reduced [flavodoxin]. It functions in the pathway isoprenoid biosynthesis; isopentenyl diphosphate biosynthesis via DXP pathway; isopentenyl diphosphate from 1-deoxy-D-xylulose 5-phosphate: step 5/6. In terms of biological role, converts 2C-methyl-D-erythritol 2,4-cyclodiphosphate (ME-2,4cPP) into 1-hydroxy-2-methyl-2-(E)-butenyl 4-diphosphate. This chain is 4-hydroxy-3-methylbut-2-en-1-yl diphosphate synthase (flavodoxin), found in Chlamydia pneumoniae (Chlamydophila pneumoniae).